Consider the following 154-residue polypeptide: Protein X (154 aa).

Residues 68–117 (PCALRFTSARCMETTVNAPRNLPKVLHKRTLGLSAMSTTKIETYFKDCVF) are mitochondrial targeting sequence.

This sequence belongs to the orthohepadnavirus protein X family. As to quaternary structure, may form homodimer. May interact with host CEBPA, CFLAR, CREB1, DDB1, E4F1, HBXIP, HSPD1/HSP60, NFKBIA, POLR2E and SMAD4. Interacts with host SMC5-SMC6 complex and induces its degradation. Interacts with host TRPC4AP; leading to prevent ubiquitination of TRPC4AP. Interacts with host PLSCR1; this interaction promotes ubiquitination and degradation of HBx and impairs HBx-mediated cell proliferation. A fraction may be phosphorylated in insect cells and HepG2 cells, a human hepatoblastoma cell line. Phosphorylated in vitro by host protein kinase C or mitogen-activated protein kinase. N-acetylated in insect cells.

The protein localises to the host cytoplasm. It is found in the host nucleus. It localises to the host mitochondrion. In terms of biological role, multifunctional protein that plays a role in silencing host antiviral defenses and promoting viral transcription. Does not seem to be essential for HBV infection. May be directly involved in development of cirrhosis and liver cancer (hepatocellular carcinoma). Most of cytosolic activities involve modulation of cytosolic calcium. The effect on apoptosis is controversial depending on the cell types in which the studies have been conducted. May induce apoptosis by localizing in mitochondria and causing loss of mitochondrial membrane potential. May also modulate apoptosis by binding host CFLAR, a key regulator of the death-inducing signaling complex (DISC). Promotes viral transcription by using the host E3 ubiquitin ligase DDB1 to target the SMC5-SMC6 complex to proteasomal degradation. This host complex would otherwise bind to viral episomal DNA, and prevents its transcription. Moderately stimulates transcription of many different viral and cellular transcription elements. Promoters and enhancers stimulated by HBx contain DNA binding sites for NF-kappa-B, AP-1, AP-2, c-EBP, ATF/CREB, or the calcium-activated factor NF-AT. This Chimpanzee hepatitis B virus (isolate United Kingdom/LSH/1988) (HBVcpz) protein is Protein X.